The sequence spans 285 residues: NADPH-dependent 7-cyano-7-deazaguanine reductase (285 aa).

91-93 (IES) is a substrate binding site. 93–94 (SK) lines the NADPH pocket. Cys-193 functions as the Thioimide intermediate in the catalytic mechanism. The Proton donor role is filled by Asp-200. Position 232–233 (232–233 (HE)) interacts with substrate. 261–262 (RG) serves as a coordination point for NADPH.

Belongs to the GTP cyclohydrolase I family. QueF type 2 subfamily. Homodimer.

The protein resides in the cytoplasm. It catalyses the reaction 7-aminomethyl-7-carbaguanine + 2 NADP(+) = 7-cyano-7-deazaguanine + 2 NADPH + 3 H(+). Its pathway is tRNA modification; tRNA-queuosine biosynthesis. Catalyzes the NADPH-dependent reduction of 7-cyano-7-deazaguanine (preQ0) to 7-aminomethyl-7-deazaguanine (preQ1). In Shewanella baltica (strain OS223), this protein is NADPH-dependent 7-cyano-7-deazaguanine reductase.